The sequence spans 171 residues: Large ribosomal subunit protein uL5 (171 aa).

This sequence belongs to the universal ribosomal protein uL5 family. As to quaternary structure, part of the 50S ribosomal subunit; contacts the 5S rRNA and probably tRNA. Forms a bridge to the 30S subunit in the 70S ribosome.

Its function is as follows. This is one of the proteins that bind and probably mediate the attachment of the 5S RNA into the large ribosomal subunit, where it forms part of the central protuberance. In the 70S ribosome it contacts protein S13 of the 30S subunit (bridge B1b), connecting the 2 subunits; this bridge is implicated in subunit movement. May contact the P site tRNA; the 5S rRNA and some of its associated proteins might help stabilize positioning of ribosome-bound tRNAs. This is Large ribosomal subunit protein uL5 from Methanocorpusculum labreanum (strain ATCC 43576 / DSM 4855 / Z).